The following is a 357-amino-acid chain: Alanine racemase (357 aa).

Lysine 34 serves as the catalytic Proton acceptor; specific for D-alanine. At lysine 34 the chain carries N6-(pyridoxal phosphate)lysine. Arginine 130 serves as a coordination point for substrate. The active-site Proton acceptor; specific for L-alanine is the tyrosine 253. A substrate-binding site is contributed by methionine 301.

The protein belongs to the alanine racemase family. It depends on pyridoxal 5'-phosphate as a cofactor.

The enzyme catalyses L-alanine = D-alanine. Its pathway is amino-acid biosynthesis; D-alanine biosynthesis; D-alanine from L-alanine: step 1/1. Catalyzes the interconversion of L-alanine and D-alanine. May also act on other amino acids. This is Alanine racemase (alr) from Mannheimia succiniciproducens (strain KCTC 0769BP / MBEL55E).